The primary structure comprises 343 residues: Inositol 2-dehydrogenase 1 (343 aa).

Belongs to the Gfo/Idh/MocA family. As to quaternary structure, homotetramer.

The enzyme catalyses myo-inositol + NAD(+) = scyllo-inosose + NADH + H(+). In terms of biological role, involved in the oxidation of myo-inositol (MI) to 2-keto-myo-inositol (2KMI or 2-inosose). This chain is Inositol 2-dehydrogenase 1, found in Mycolicibacterium vanbaalenii (strain DSM 7251 / JCM 13017 / BCRC 16820 / KCTC 9966 / NRRL B-24157 / PYR-1) (Mycobacterium vanbaalenii).